We begin with the raw amino-acid sequence, 156 residues long: Ribosomal RNA large subunit methyltransferase H (156 aa).

Residues Leu73, Gly104, and 123–128 (LSSLTL) each bind S-adenosyl-L-methionine.

The protein belongs to the RNA methyltransferase RlmH family. In terms of assembly, homodimer.

Its subcellular location is the cytoplasm. It carries out the reaction pseudouridine(1915) in 23S rRNA + S-adenosyl-L-methionine = N(3)-methylpseudouridine(1915) in 23S rRNA + S-adenosyl-L-homocysteine + H(+). Functionally, specifically methylates the pseudouridine at position 1915 (m3Psi1915) in 23S rRNA. The protein is Ribosomal RNA large subunit methyltransferase H of Bordetella petrii (strain ATCC BAA-461 / DSM 12804 / CCUG 43448).